Consider the following 415-residue polypeptide: MTIPDLCNDLVDEILCRVPARNLKRLRSTSKRWNRLFKDDRRFAREHMHKAPKEYLPLMLTSEYRICPVSINLQGDVPSVVLKRELSLPDPDYSHQFDIGRVFHCDGLLVCNHVGKNPRYGSKIVVWNPLTGQTRWIEAGYRWKEYEVRFVLGYCYQQDENNSCSKKIYKILCFYPNGQDTEIYELNYSDRWTRTIPDGDLTPGWTLIYSEQTVSMNGNLYLFASEKSKPHLGVSLLRFDFSTEKSSLCVTLPYQRPRYEILSISAVRGGENLSLLLQLDFESKTEIWVTNKIDDTTTKGAAVSWTKVLAFDLSPDLQLFSEEVNFLLDEDKKVAVCCERWLEPQEHHRYQCRREYKITDKIYILGEDNKVDEVGSGEGEATDSLEGISQVILNYAPSLVQIEQAGGGKTKRGDD.

The F-box domain maps to methionine 1–glutamate 46.

As to quaternary structure, interacts with EIN2 (via C-terminus).

Functionally, negative regulator of EIN2 protein stability. The protein is F-box protein ETP1 of Arabidopsis thaliana (Mouse-ear cress).